A 334-amino-acid polypeptide reads, in one-letter code: Leukocyte cell-derived chemotaxin 1 (334 aa).

Residues 46 to 66 form a helical membrane-spanning segment; the sequence is VVLISGAVLLLFGAIGAFYFW. Residues 105–201 form the BRICHOS domain; sequence GSGAEEAIEV…FCGDLPIFWL (97 aa). A disulfide bridge links Cys-132 with Cys-193. Positions 211 to 214 are excised as a propeptide; the sequence is RERR. A disordered region spans residues 212–268; it reads ERREVVRSSAPSTTRRPHSEPRGNAGPGRLSNRTRPSVQDDEEPFNPDNPYHQQEGE. Asn-243 carries an N-linked (GlcNAc...) asparagine glycan. Intrachain disulfides connect Cys-282–Cys-286, Cys-283–Cys-323, Cys-293–Cys-317, and Cys-297–Cys-313.

Belongs to the chondromodulin-1 family. In terms of processing, after cleavage, the post-translationally modified ChM-I is secreted as a glycoprotein. Detected in cartilage, cardiac valves and valvular interstitial cells (at protein level). Expressed in eye.

It localises to the secreted. Its subcellular location is the extracellular space. The protein resides in the extracellular matrix. It is found in the endomembrane system. Its function is as follows. Bifunctional growth regulator that stimulates the growth of cultured chondrocytes in the presence of basic fibroblast growth factor (FGF) but inhibits the growth of cultured vascular endothelial cells. May contribute to the rapid growth of cartilage and vascular invasion prior to the replacement of cartilage by bone during endochondral bone development. Inhibits in vitro tube formation and mobilization of endothelial cells. Plays a role as antiangiogenic factor in cardiac valves to suppress neovascularization. The polypeptide is Leukocyte cell-derived chemotaxin 1 (Rattus norvegicus (Rat)).